The chain runs to 261 residues: Transmembrane and immunoglobulin domain-containing protein 1 (261 aa).

Residues 1–27 (MAQKTSGLIQRCRFLLLMILFLPHVMT) form the signal peptide. Positions 28–114 (SSVLSVNGKT…LQRNQSVSIS (87 aa)) constitute an Ig-like C2-type 1 domain. At 28-219 (SSVLSVNGKT…IVKDKGSTVP (192 aa)) the chain is on the extracellular side. An intrachain disulfide couples cysteine 54 to cysteine 103. Residues asparagine 83, asparagine 108, asparagine 118, and asparagine 189 are each glycosylated (N-linked (GlcNAc...) asparagine). The Ig-like C2-type 2 domain occupies 122–208 (PPLLSGNDFQ…LIETKTKDFH (87 aa)). An intrachain disulfide couples cysteine 143 to cysteine 194. Residues 220-240 (IEPIIAACVVVFLTLVFGVIA) traverse the membrane as a helical segment. Residues 241 to 261 (RRKRIMKLCRKDQGPQCRTAL) lie on the Cytoplasmic side of the membrane.

As to quaternary structure, homodimer. N-glycosylated.

Its subcellular location is the cell membrane. It localises to the cytoplasm. Functionally, may control cell-cell adhesion, cell migration and proliferation, cell morphology, and protects renal epithelial cells from oxidative cell injury to promote cell survival. The chain is Transmembrane and immunoglobulin domain-containing protein 1 from Bos taurus (Bovine).